A 746-amino-acid chain; its full sequence is UvrABC system protein C (746 aa).

Positions Ala18–Val97 constitute a GIY-YIG domain. A UVR domain is found at Arg211–Val246. Residues Ala557–Pro577 form a disordered region.

It belongs to the UvrC family. In terms of assembly, interacts with UvrB in an incision complex.

The protein localises to the cytoplasm. In terms of biological role, the UvrABC repair system catalyzes the recognition and processing of DNA lesions. UvrC both incises the 5' and 3' sides of the lesion. The N-terminal half is responsible for the 3' incision and the C-terminal half is responsible for the 5' incision. This is UvrABC system protein C from Bifidobacterium longum (strain NCC 2705).